An 86-amino-acid chain; its full sequence is MKTLLLTLVVVTIVCLDLGYSLTCLNCPEQYCKRIHTCRNGENVCFKRFYEGKLLCKQFRRGCAATCPEAKSREIVQCCSTDECNH.

The first 21 residues, 1-21 (MKTLLLTLVVVTIVCLDLGYS), serve as a signal peptide directing secretion. Cystine bridges form between Cys-24–Cys-45, Cys-27–Cys-32, Cys-38–Cys-63, Cys-67–Cys-78, and Cys-79–Cys-84.

It belongs to the three-finger toxin family. Ancestral subfamily. Orphan group II sub-subfamily. As to expression, expressed by the venom gland.

The protein localises to the secreted. Its function is as follows. Binds with low affinity to muscular (alpha-1-beta-1-delta-epsilon/CHRNA1-CHRNB1-CHRND-CHRNE) and very low affinity to neuronal (alpha-7/CHRNA7) nicotinic acetylcholine receptor (nAChR). The sequence is that of Weak neurotoxin WNTX34 from Ophiophagus hannah (King cobra).